Here is a 299-residue protein sequence, read N- to C-terminus: Oxygen-dependent coproporphyrinogen-III oxidase (299 aa).

S92 provides a ligand contact to substrate. Mn(2+) contacts are provided by H96 and H106. Residue H106 is the Proton donor of the active site. A substrate-binding site is contributed by 108–110 (NVR). Residues H145 and H175 each contribute to the Mn(2+) site. An important for dimerization region spans residues 240-275 (YVEFNLVWDRGTLFGLQTGGRTESILMSMPPLVRWE). 258–260 (GGR) is a substrate binding site.

The protein belongs to the aerobic coproporphyrinogen-III oxidase family. Homodimer. Mn(2+) is required as a cofactor.

It is found in the cytoplasm. The catalysed reaction is coproporphyrinogen III + O2 + 2 H(+) = protoporphyrinogen IX + 2 CO2 + 2 H2O. The protein operates within porphyrin-containing compound metabolism; protoporphyrin-IX biosynthesis; protoporphyrinogen-IX from coproporphyrinogen-III (O2 route): step 1/1. Functionally, involved in the heme biosynthesis. Catalyzes the aerobic oxidative decarboxylation of propionate groups of rings A and B of coproporphyrinogen-III to yield the vinyl groups in protoporphyrinogen-IX. The polypeptide is Oxygen-dependent coproporphyrinogen-III oxidase (Escherichia fergusonii (strain ATCC 35469 / DSM 13698 / CCUG 18766 / IAM 14443 / JCM 21226 / LMG 7866 / NBRC 102419 / NCTC 12128 / CDC 0568-73)).